Reading from the N-terminus, the 130-residue chain is Small ribosomal subunit protein uS9 (130 aa).

Belongs to the universal ribosomal protein uS9 family.

This Tolumonas auensis (strain DSM 9187 / NBRC 110442 / TA 4) protein is Small ribosomal subunit protein uS9.